Reading from the N-terminus, the 157-residue chain is Small ribosomal subunit protein uS7 (157 aa).

The protein belongs to the universal ribosomal protein uS7 family. As to quaternary structure, part of the 30S ribosomal subunit. Contacts proteins S9 and S11.

Its function is as follows. One of the primary rRNA binding proteins, it binds directly to 16S rRNA where it nucleates assembly of the head domain of the 30S subunit. Is located at the subunit interface close to the decoding center, probably blocks exit of the E-site tRNA. The sequence is that of Small ribosomal subunit protein uS7 from Leptospira interrogans serogroup Icterohaemorrhagiae serovar copenhageni (strain Fiocruz L1-130).